The sequence spans 141 residues: Large ribosomal subunit protein uL11 (141 aa).

Belongs to the universal ribosomal protein uL11 family. As to quaternary structure, part of the ribosomal stalk of the 50S ribosomal subunit. Interacts with L10 and the large rRNA to form the base of the stalk. L10 forms an elongated spine to which L12 dimers bind in a sequential fashion forming a multimeric L10(L12)X complex. One or more lysine residues are methylated.

Functionally, forms part of the ribosomal stalk which helps the ribosome interact with GTP-bound translation factors. The polypeptide is Large ribosomal subunit protein uL11 (Wolinella succinogenes (strain ATCC 29543 / DSM 1740 / CCUG 13145 / JCM 31913 / LMG 7466 / NCTC 11488 / FDC 602W) (Vibrio succinogenes)).